A 480-amino-acid chain; its full sequence is Alkaline nuclease (480 aa).

The protein belongs to the herpesviridae alkaline nuclease family. Interacts with major DNA-binding protein; this interaction increases the nuclease processivity of the alkaline exonuclease.

The protein resides in the host nucleus. It is found in the host cytoplasm. In terms of biological role, plays a role in processing non linear or branched viral DNA intermediates in order to promote the production of mature packaged unit-length linear progeny viral DNA molecules. Exhibits endonuclease and exonuclease activities and accepts both double-stranded and single-stranded DNA as substrate. Exonuclease digestion of DNA is in the 5'-&gt; 3' direction and the products are 5'-monophosphate nucleosides. Additionally, forms a recombinase with the major DNA-binding protein, which displays strand exchange activity. This is Alkaline nuclease (U70) from Homo sapiens (Human).